Reading from the N-terminus, the 334-residue chain is Homoserine kinase (334 aa).

Belongs to the pseudomonas-type ThrB family.

The enzyme catalyses L-homoserine + ATP = O-phospho-L-homoserine + ADP + H(+). It functions in the pathway amino-acid biosynthesis; L-threonine biosynthesis; L-threonine from L-aspartate: step 4/5. The protein is Homoserine kinase of Ralstonia nicotianae (strain ATCC BAA-1114 / GMI1000) (Ralstonia solanacearum).